The chain runs to 430 residues: Protein translocase subunit SecY (430 aa).

The next 10 helical transmembrane spans lie at 18-38 (IFFT…PAPG), 68-88 (FSIF…MQLL), 117-137 (FAII…NNYL), 147-167 (VMSY…LIWL), 174-194 (FGVG…TLPS), 217-237 (ILGL…VLEA), 270-290 (VIPV…TLFF), 308-328 (NIGM…YAFV), 368-388 (FVGS…TKFM), and 389-409 (GLPQ…GVAI).

Belongs to the SecY/SEC61-alpha family. In terms of assembly, component of the Sec protein translocase complex. Heterotrimer consisting of SecY, SecE and SecG subunits. The heterotrimers can form oligomers, although 1 heterotrimer is thought to be able to translocate proteins. Interacts with the ribosome. Interacts with SecDF, and other proteins may be involved. Interacts with SecA.

It is found in the cell membrane. In terms of biological role, the central subunit of the protein translocation channel SecYEG. Consists of two halves formed by TMs 1-5 and 6-10. These two domains form a lateral gate at the front which open onto the bilayer between TMs 2 and 7, and are clamped together by SecE at the back. The channel is closed by both a pore ring composed of hydrophobic SecY resides and a short helix (helix 2A) on the extracellular side of the membrane which forms a plug. The plug probably moves laterally to allow the channel to open. The ring and the pore may move independently. This is Protein translocase subunit SecY from Staphylococcus epidermidis (strain ATCC 35984 / DSM 28319 / BCRC 17069 / CCUG 31568 / BM 3577 / RP62A).